The primary structure comprises 394 residues: Phosphoglycerate kinase (394 aa).

Substrate is bound by residues 21–23 (DFN), arginine 36, 59–62 (HLGR), arginine 118, and arginine 151. Position 183 is a phosphoserine (serine 183). ATP is bound by residues lysine 201 and glycine 292. Residue threonine 299 is modified to Phosphothreonine. ATP is bound by residues glutamate 323 and 350–353 (GGDS).

The protein belongs to the phosphoglycerate kinase family. In terms of assembly, monomer.

Its subcellular location is the cytoplasm. It catalyses the reaction (2R)-3-phosphoglycerate + ATP = (2R)-3-phospho-glyceroyl phosphate + ADP. It participates in carbohydrate degradation; glycolysis; pyruvate from D-glyceraldehyde 3-phosphate: step 2/5. The sequence is that of Phosphoglycerate kinase from Bacillus cereus (strain ATCC 10987 / NRS 248).